The primary structure comprises 464 residues: Siroheme synthase (464 aa).

A precorrin-2 dehydrogenase /sirohydrochlorin ferrochelatase region spans residues 1 to 203 (MEFLPLFHNL…GQGDEAERLL (203 aa)). Residues 22–23 (EI) and 43–44 (PQ) contribute to the NAD(+) site. Ser128 carries the post-translational modification Phosphoserine. A uroporphyrinogen-III C-methyltransferase region spans residues 216–464 (GEVYLVGAGP…KWFEGAQSQV (249 aa)). Pro225 is an S-adenosyl-L-methionine binding site. Asp248 acts as the Proton acceptor in catalysis. Residue Lys270 is the Proton donor of the active site. S-adenosyl-L-methionine contacts are provided by residues 301–303 (GGD), Ile306, 331–332 (TA), Met383, and Gly412.

In the N-terminal section; belongs to the precorrin-2 dehydrogenase / sirohydrochlorin ferrochelatase family. The protein in the C-terminal section; belongs to the precorrin methyltransferase family.

The enzyme catalyses uroporphyrinogen III + 2 S-adenosyl-L-methionine = precorrin-2 + 2 S-adenosyl-L-homocysteine + H(+). It carries out the reaction precorrin-2 + NAD(+) = sirohydrochlorin + NADH + 2 H(+). It catalyses the reaction siroheme + 2 H(+) = sirohydrochlorin + Fe(2+). The protein operates within cofactor biosynthesis; adenosylcobalamin biosynthesis; precorrin-2 from uroporphyrinogen III: step 1/1. Its pathway is cofactor biosynthesis; adenosylcobalamin biosynthesis; sirohydrochlorin from precorrin-2: step 1/1. It functions in the pathway porphyrin-containing compound metabolism; siroheme biosynthesis; precorrin-2 from uroporphyrinogen III: step 1/1. It participates in porphyrin-containing compound metabolism; siroheme biosynthesis; siroheme from sirohydrochlorin: step 1/1. The protein operates within porphyrin-containing compound metabolism; siroheme biosynthesis; sirohydrochlorin from precorrin-2: step 1/1. Functionally, multifunctional enzyme that catalyzes the SAM-dependent methylations of uroporphyrinogen III at position C-2 and C-7 to form precorrin-2 via precorrin-1. Then it catalyzes the NAD-dependent ring dehydrogenation of precorrin-2 to yield sirohydrochlorin. Finally, it catalyzes the ferrochelation of sirohydrochlorin to yield siroheme. This is Siroheme synthase from Pseudomonas fluorescens (strain SBW25).